A 726-amino-acid chain; its full sequence is WD repeat-containing and planar cell polarity effector protein fritz homolog (726 aa).

WD repeat units follow at residues 305–343 (LRSKAISCCKNSTEDKLIVGCEDSSVILYEAHRGVTLLA) and 344–383 (QAELMPSLISCHPSGAILLVGSNQGELQVFDIALSPINIQ). The segment covering 642–660 (SSGSTPKHTIQQKIPNGPS) has biased composition (polar residues). The interval 642–717 (SSGSTPKHTI…RRQDTEDVGS (76 aa)) is disordered. Over residues 672 to 685 (MEETEEEEEEEEEA) the composition is skewed to acidic residues. The span at 701–712 (GELREDHRRQDT) shows a compositional bias: basic and acidic residues.

The protein belongs to the WD repeat fritz family. In terms of assembly, component of the CPLANE (ciliogenesis and planar polarity effectors) complex, composed of INTU, FUZ and WDPCP. Interacts with CPLANE1.

It localises to the cell membrane. The protein localises to the cytoplasm. It is found in the cytoskeleton. Its subcellular location is the cilium axoneme. The protein resides in the cilium basal body. Probable effector of the planar cell polarity signaling pathway which regulates the septin cytoskeleton in both ciliogenesis and collective cell movements. Together with FUZ and WDPCP proposed to function as core component of the CPLANE (ciliogenesis and planar polarity effectors) complex involved in the recruitment of peripheral IFT-A proteins to basal bodies. Binds phosphatidylinositol 3-phosphate with highest affinity, followed by phosphatidylinositol 4-phosphate and phosphatidylinositol 5-phosphate. In Rattus norvegicus (Rat), this protein is WD repeat-containing and planar cell polarity effector protein fritz homolog (Wdpcp).